We begin with the raw amino-acid sequence, 48 residues long: Large ribosomal subunit protein bL32c (48 aa).

It belongs to the bacterial ribosomal protein bL32 family.

The protein localises to the plastid. It is found in the chloroplast. The polypeptide is Large ribosomal subunit protein bL32c (rpl32) (Vicia faba (Broad bean)).